Here is a 141-residue protein sequence, read N- to C-terminus: Sperm protein associated with the nucleus on the X chromosome N3 (141 aa).

Over residues 1-10 (MEQPTSSTNG) the composition is skewed to polar residues. Disordered regions lie at residues 1-47 (MEQP…TKTS) and 66-141 (NQLE…SGED). Positions 11–26 (EKTKSPCESNNKKNDE) are enriched in basic and acidic residues. A compositionally biased stretch (polar residues) spans 66–80 (NQLENEQSQENSINP). Positions 84–103 (EEDEGVDLSEGSSNEDEDLG) are enriched in acidic residues. Over residues 132–141 (EGSSQDSGED) the composition is skewed to polar residues.

It belongs to the SPAN-X family.

This chain is Sperm protein associated with the nucleus on the X chromosome N3 (SPANXN3), found in Homo sapiens (Human).